The following is a 265-amino-acid chain: Glutamate racemase (265 aa).

Residues 9 to 10 (DS) and 41 to 42 (YS) each bind substrate. The active-site Proton donor/acceptor is the Cys-73. Residue 74–75 (NT) coordinates substrate. Cys-184 acts as the Proton donor/acceptor in catalysis. Substrate is bound at residue 185-186 (TH).

It belongs to the aspartate/glutamate racemases family.

The enzyme catalyses L-glutamate = D-glutamate. Its pathway is cell wall biogenesis; peptidoglycan biosynthesis. Functionally, provides the (R)-glutamate required for cell wall biosynthesis. The sequence is that of Glutamate racemase from Actinobacillus pleuropneumoniae serotype 3 (strain JL03).